The sequence spans 459 residues: MSKIVVVGANHAGTACINTMLDNFGNENEIVVFDQNSNISFLGCGMALWIGEQIDGAEGLFYSDKEKLEAKGAKVYMNSPVLSIDYDAKVVTAEVEGKEHKESYEKLIFATGSTPILPPIEGVEIVKGNREFKATLENVQFVKLYQNAEEVINKLSDKSQHLDRIAVVGGGYIGVELAEAFERLGKEVVLVDIVDTVLNGYYDKDFTQMMAKNLEDHNIRLALGQTVKAIEGDGKVERLITDKESFDVDMVILAVGFRPNTALADGKIELFRNGAFLVDKKQETSIPGVYAVGDCATVYDNARKDTSYIALASNAVRTGIVGAYNACGHELEGIGVQGSNGISIYGLHMVSTGLTLEKAKAAGYNATETGFNDLQKPEFMKHDNHEVAIKIVFDKDSREILGAQMVSHDIAISMGIHMFSLAIQEHVTIDKLALTDLFFLPHFNKPYNYITMAALTAEK.

Asparagine 10 is a binding site for FAD. Histidine 11 serves as the catalytic Proton acceptor. FAD contacts are provided by alanine 12, aspartate 34, glutamine 35, cysteine 44, valine 81, alanine 110, serine 113, lysine 143, and tyrosine 172. The Redox-active role is filled by cysteine 44. Residue cysteine 44 is modified to Cysteine sulfinic acid (-SO2H). The NAD(+) site is built by isoleucine 173, aspartate 192, tyrosine 201, and glycine 256. FAD is bound at residue aspartate 294. Alanine 310 lines the NAD(+) pocket. Positions 311, 312, and 313 each coordinate FAD. Glycine 341 contributes to the NAD(+) binding site. An FAD-binding site is contributed by phenylalanine 439.

The protein belongs to the class-III pyridine nucleotide-disulfide oxidoreductase family. The cofactor is FAD.

The protein localises to the secreted. It localises to the cell wall. It carries out the reaction 2 NADH + O2 + 2 H(+) = 2 NAD(+) + 2 H2O. Functionally, catalyzes the four-electron reduction of molecular oxygen to water. Plays a role in redox balance maintenance. May be involved in mediating bacterial adhesion to host cells. May be considered a potential virulence factor. This is NADH oxidase from Streptococcus pneumoniae (strain ATCC BAA-255 / R6).